The chain runs to 321 residues: Probable arabinan endo-1,5-alpha-L-arabinosidase A (321 aa).

Residues 1–19 (MYRLLSVASVPLLASLVHG) form the signal peptide. The active-site Proton acceptor is the Asp34. Glu200 acts as the Proton donor in catalysis. Asn295 is a glycosylation site (N-linked (GlcNAc...) asparagine).

It belongs to the glycosyl hydrolase 43 family.

Its subcellular location is the secreted. The enzyme catalyses Endohydrolysis of (1-&gt;5)-alpha-arabinofuranosidic linkages in (1-&gt;5)-arabinans.. It functions in the pathway glycan metabolism; L-arabinan degradation. Functionally, endo-1,5-alpha-L-arabinanase involved in degradation of pectin. Its preferred substrate is linear 1,5-alpha-L-arabinan. In Aspergillus niger (strain ATCC MYA-4892 / CBS 513.88 / FGSC A1513), this protein is Probable arabinan endo-1,5-alpha-L-arabinosidase A (abnA).